The chain runs to 263 residues: Zinc import ATP-binding protein ZnuC (263 aa).

Residues 11 to 226 (VELKNINVVF…PTFIHFFGDQ (216 aa)) enclose the ABC transporter domain. 43–50 (GPNGGGKS) contributes to the ATP binding site.

It belongs to the ABC transporter superfamily. Zinc importer (TC 3.A.1.15.5) family. The complex is composed of two ATP-binding proteins (ZnuC), two transmembrane proteins (ZnuB) and a solute-binding protein (ZnuA).

The protein resides in the cell inner membrane. It catalyses the reaction Zn(2+)(out) + ATP(in) + H2O(in) = Zn(2+)(in) + ADP(in) + phosphate(in) + H(+)(in). In terms of biological role, part of the ABC transporter complex ZnuABC involved in zinc import. Responsible for energy coupling to the transport system. This Pasteurella multocida (strain Pm70) protein is Zinc import ATP-binding protein ZnuC.